The sequence spans 231 residues: Flagellar L-ring protein (231 aa).

The N-terminal stretch at 1-18 (MNRYVSVLALSGIAVLAG) is a signal peptide. Cys19 carries N-palmitoyl cysteine lipidation. The S-diacylglycerol cysteine moiety is linked to residue Cys19.

The protein belongs to the FlgH family. As to quaternary structure, the basal body constitutes a major portion of the flagellar organelle and consists of four rings (L,P,S, and M) mounted on a central rod.

Its subcellular location is the cell outer membrane. It localises to the bacterial flagellum basal body. Functionally, assembles around the rod to form the L-ring and probably protects the motor/basal body from shearing forces during rotation. The polypeptide is Flagellar L-ring protein (Pseudomonas fluorescens (strain SBW25)).